Consider the following 269-residue polypeptide: Protein shisa-1 (269 aa).

The N-terminal stretch at 1–18 is a signal peptide; that stretch reads MEFIVLLTVCALLGLSCG. Residues 19 to 98 lie on the Extracellular side of the membrane; it reads QHGEYCHGWT…LPPTVPTYFP (80 aa). The chain crosses the membrane as a helical span at residues 99-119; the sequence is FLLVGSIFVSFVILGSLVGLC. Residues 120 to 269 lie on the Cytoplasmic side of the membrane; the sequence is CCKCLKPEDD…TVCSGSPSKC (150 aa). The disordered stretch occupies residues 129–167; the sequence is DTQVSGPAPIQSRLLDQDPSTDTSRHSSSSSASMPRPPI. The span at 146–162 shows a compositional bias: low complexity; that stretch reads DPSTDTSRHSSSSSASM.

It belongs to the shisa family. As to quaternary structure, interacts with immature forms of fzd8 and fgfr.

Its subcellular location is the endoplasmic reticulum. The protein localises to the membrane. Its function is as follows. Required for head formation during gastrulation. Functions as an inhibitor for the caudalizing signals wnt and fgf, does not inhibit bmp, activin and nodal signaling in head formation process. Induces retention of fzd8 in the endoplasmic reticulum and inhibits trafficking of fzd8 to the cell surface. The chain is Protein shisa-1 (shisa1) from Xenopus laevis (African clawed frog).